Reading from the N-terminus, the 64-residue chain is Large ribosomal subunit protein bL33 (64 aa).

Belongs to the bacterial ribosomal protein bL33 family.

This chain is Large ribosomal subunit protein bL33, found in Synechococcus sp. (strain JA-3-3Ab) (Cyanobacteria bacterium Yellowstone A-Prime).